Here is a 438-residue protein sequence, read N- to C-terminus: Coenzyme A disulfide reductase (438 aa).

8–33 is an FAD binding site; the sequence is GAVAGGATCASQIRRLDKESDIIIFE. 5 residues coordinate substrate: Thr15, Gln19, Arg22, Ser39, and Asn42. Cys43 serves as the catalytic Nucleophile. The Redox-active role is filled by Cys43. Position 71 (Lys71) interacts with substrate. 151-166 serves as a coordination point for NADP(+); sequence VLVVGAGYVSLEVLEN. 267-277 contacts FAD; the sequence is TNVPNIYAIGD. A substrate-binding site is contributed by His299. Tyr419 is a binding site for FAD. Lys427 is a binding site for substrate.

This sequence belongs to the class-III pyridine nucleotide-disulfide oxidoreductase family. In terms of assembly, homodimer. It depends on FAD as a cofactor.

It carries out the reaction NADP(+) + 2 CoA = CoA-disulfide + NADPH + H(+). Its function is as follows. Catalyzes specifically the NADPH-dependent reduction of coenzyme A disulfide. This is Coenzyme A disulfide reductase from Staphylococcus aureus (strain COL).